We begin with the raw amino-acid sequence, 192 residues long: MKRIGLFGGTFDPPHLGHLLIAQEALTAVKLDEVWFVPVSTPPHKERAGLTSGKDRYDMVKAALVQEERFRVCDIELIRKGKSYTIDTVRELKQTYPDDEFFFLIGGDMVNMLPEWRGIDELKQLVTFVAFNRPGASAKSQPDVHFVPFVEVNISSSLIRERLAKGKPIRYFVTPAVEQLIEERNLYGDNNE.

It belongs to the NadD family.

The enzyme catalyses nicotinate beta-D-ribonucleotide + ATP + H(+) = deamido-NAD(+) + diphosphate. The protein operates within cofactor biosynthesis; NAD(+) biosynthesis; deamido-NAD(+) from nicotinate D-ribonucleotide: step 1/1. Its function is as follows. Catalyzes the reversible adenylation of nicotinate mononucleotide (NaMN) to nicotinic acid adenine dinucleotide (NaAD). This Shouchella clausii (strain KSM-K16) (Alkalihalobacillus clausii) protein is Probable nicotinate-nucleotide adenylyltransferase.